Here is a 287-residue protein sequence, read N- to C-terminus: ATP synthase gamma chain (287 aa).

Belongs to the ATPase gamma chain family. In terms of assembly, F-type ATPases have 2 components, CF(1) - the catalytic core - and CF(0) - the membrane proton channel. CF(1) has five subunits: alpha(3), beta(3), gamma(1), delta(1), epsilon(1). CF(0) has three main subunits: a, b and c.

The protein localises to the cell inner membrane. Its function is as follows. Produces ATP from ADP in the presence of a proton gradient across the membrane. The gamma chain is believed to be important in regulating ATPase activity and the flow of protons through the CF(0) complex. The chain is ATP synthase gamma chain from Klebsiella pneumoniae (strain 342).